The following is a 107-amino-acid chain: MSESVSKSSQPLASKQEKDGTEKRGRGRPRKQPSVSPGTALVGSQKEPSEVPTPKRPRGRPKGSKNKGTAKTRKVTTTPGRKPRGRPKKLEKEEEEGISQESSEEEQ.

Positions methionine 1 to alanine 13 are enriched in polar residues. Residues methionine 1–glutamine 107 are disordered. Serine 2 carries the N-acetylserine modification. Lysine 7 carries the post-translational modification N6-acetyllysine. An ADP-ribosylserine modification is found at serine 8. Serine 9 carries the ADP-ribosylserine; alternate modification. At serine 9 the chain carries Phosphoserine; alternate. N6-acetyllysine; alternate is present on lysine 15. Residue lysine 15 forms a Glycyl lysine isopeptide (Lys-Gly) (interchain with G-Cter in SUMO2); alternate linkage. Positions lysine 15 to arginine 24 are enriched in basic and acidic residues. The segment at residues threonine 21 to lysine 31 is a DNA-binding region (a.T hook 1). Asymmetric dimethylarginine; alternate is present on arginine 26. Omega-N-methylarginine; alternate is present on arginine 26. Arginine 26 is modified (symmetric dimethylarginine; alternate). A Phosphoserine; by HIPK2 and CDC2 modification is found at serine 36. The residue at position 39 (threonine 39) is a Phosphothreonine. Phosphoserine is present on residues serine 44 and serine 49. Residue threonine 53 is modified to Phosphothreonine; by HIPK2 and CDC2. DNA-binding regions (a.T hook) lie at residues threonine 53 to glycine 63 and threonine 78 to lysine 89. The interval threonine 53–threonine 77 is interaction with HIPK2. The span at lysine 55 to lysine 74 shows a compositional bias: basic residues. 2 positions are modified to asymmetric dimethylarginine; by PRMT6; alternate: arginine 58 and arginine 60. Omega-N-methylarginine; by PRMT6; alternate is present on residues arginine 58 and arginine 60. Threonine 78 carries the post-translational modification Phosphothreonine; by HIPK2 and CDC2. Residues glutamate 93 to glutamine 107 show a composition bias toward acidic residues. Phosphoserine is present on residues serine 99, serine 102, and serine 103.

It belongs to the HMGA family. Interacts with HIPK2. Isoforms HMG-I and HMG-Y can be phosphorylated by HIPK2. Phosphorylation may modulate DNA-binding affinity. In terms of processing, methylation at Arg-58 is mutually exclusive with methylation at Arg-60.

It is found in the nucleus. Its subcellular location is the chromosome. HMG-I/Y bind preferentially to the minor groove of A+T rich regions in double-stranded DNA. It is suggested that these proteins could function in nucleosome phasing and in the 3'-end processing of mRNA transcripts. They are also involved in the transcription regulation of genes containing, or in close proximity to A+T-rich regions. The polypeptide is High mobility group protein HMG-I/HMG-Y (Hmga1) (Rattus norvegicus (Rat)).